Consider the following 699-residue polypeptide: eEF1A lysine and N-terminal methyltransferase (699 aa).

M1 carries the N-acetylmethionine modification. Phosphoserine is present on S267. The disordered stretch occupies residues V433–A460. A compositionally biased stretch (basic residues) spans R436–R449.

This sequence belongs to the methyltransferase superfamily. Forms a tripartite complex containing GAB1, METTL13 and SPRY2. Within the complex interacts with GAB1 and SPRY2.

The protein localises to the cytoplasm. Its subcellular location is the nucleus. It is found in the mitochondrion. It catalyses the reaction L-lysyl-[protein] + S-adenosyl-L-methionine = N(6)-methyl-L-lysyl-[protein] + S-adenosyl-L-homocysteine + H(+). The catalysed reaction is N(6)-methyl-L-lysyl-[protein] + S-adenosyl-L-methionine = N(6),N(6)-dimethyl-L-lysyl-[protein] + S-adenosyl-L-homocysteine + H(+). The enzyme catalyses N-terminal glycyl-L-lysyl-L-glutamyl-[protein] + 3 S-adenosyl-L-methionine = N-terminal N,N,N-trimethyl-glycyl-L-lysyl-L-glutamyl-[protein] + 3 S-adenosyl-L-homocysteine + 3 H(+). In terms of biological role, dual methyltransferase that catalyzes methylation of elongation factor 1-alpha (EEF1A1 and EEF1A2) at two different positions, and is therefore involved in the regulation of mRNA translation. Via its C-terminus, methylates EEF1A1 and EEF1A2 at the N-terminal residue 'Gly-2'. Via its N-terminus dimethylates EEF1A1 and EEF1A2 at residue 'Lys-55'. Has no activity towards core histones H2A, H2B, H3 and H4. This Bos taurus (Bovine) protein is eEF1A lysine and N-terminal methyltransferase (METTL13).